A 543-amino-acid chain; its full sequence is Excitatory amino acid transporter 1 (543 aa).

Topologically, residues 1 to 47 (MTKSNGEDPRAGSRMERFQQGVRQRTLLAKKKVQNITKDDVKGFLKR) are cytoplasmic. The chain crosses the membrane as a helical span at residues 48-68 (NGFVLFTVIAVVVGSILGFSV). The Extracellular portion of the chain corresponds to 69–86 (RSYHMTFRELKYFSFPGE). Residues 87–108 (LLMRMLQMLVLPLIVSSLVTGM) form a helical membrane-spanning segment. The Cytoplasmic portion of the chain corresponds to 109–122 (AALDSKASGKMGLR). Residues 123–145 (AVVYYMTTTVIAVFIGIVIVIIV) traverse the membrane as a helical segment. Residues 146-237 (HPGKGTKEHM…MREEMIPVPG (92 aa)) lie on the Extracellular side of the membrane. N206 and N217 each carry an N-linked (GlcNAc...) asparagine glycan. Residues 238–261 (AVNGVNALGLVVFSMCFGLVIGNM) form a helical membrane-spanning segment. The Cytoplasmic segment spans residues 262 to 270 (KEQGKALKD). A helical transmembrane segment spans residues 271-298 (FFDSLNEAIMRLVAVIMWYAPIGILFLI). Over 299 to 319 (AGKIAEMEDMGVVGGQLGMYT) the chain is Extracellular. A helical membrane pass occupies residues 320-341 (VTVIIGLLIHAVIVLPLLYFAV). The Cytoplasmic segment spans residues 342–346 (TRKNP). Positions 347–377 (WVFIGGILQALITALGTSSSSATLPITFKCL) form an intramembrane region, discontinuously helical. L-aspartate is bound at residue 364 to 366 (SSS). Over 378-386 (EENNKVDKR) the chain is Cytoplasmic. The chain crosses the membrane as a helical span at residues 387–413 (VTRFVLPVGATINMDGTALYEALAAIF). Residues G395, T397, and N399 each coordinate Na(+). T403 is a binding site for L-aspartate. Residues 414-426 (IAQVNNYDLNFGQ) lie on the Extracellular side of the membrane. An intramembrane region (discontinuously helical) is located at residues 427–460 (ILTISITATAASIGAAGIPQAGLVTMVIVLTSVG). 444–448 (IPQAG) contacts L-aspartate. Residues 461–473 (LPTDDITLIIAVD) lie on the Extracellular side of the membrane. The helical transmembrane segment at 474-495 (WFLDRLRTTTNVLGDSLGAGIV) threads the bilayer. Residues D477 and N484 each coordinate L-aspartate. The Na(+) site is built by N484 and D488. At 496-543 (EHLSRHELQSGDAEMGNSVIEENEMKKPYQLVSQENELEKPIDSETKM) the chain is on the cytoplasmic side. The interval 521 to 543 (KKPYQLVSQENELEKPIDSETKM) is disordered. Over residues 532-543 (ELEKPIDSETKM) the composition is skewed to basic and acidic residues.

The protein belongs to the dicarboxylate/amino acid:cation symporter (DAACS) (TC 2.A.23) family. As to quaternary structure, homotrimer. In terms of tissue distribution, detected in retina (at protein level).

It is found in the cell membrane. The enzyme catalyses K(+)(in) + L-glutamate(out) + 3 Na(+)(out) + H(+)(out) = K(+)(out) + L-glutamate(in) + 3 Na(+)(in) + H(+)(in). It carries out the reaction K(+)(in) + L-aspartate(out) + 3 Na(+)(out) + H(+)(out) = K(+)(out) + L-aspartate(in) + 3 Na(+)(in) + H(+)(in). It catalyses the reaction D-aspartate(out) + K(+)(in) + 3 Na(+)(out) + H(+)(out) = D-aspartate(in) + K(+)(out) + 3 Na(+)(in) + H(+)(in). Sodium-dependent, high-affinity amino acid transporter that mediates the uptake of L-glutamate and also L-aspartate and D-aspartate. Functions as a symporter that transports one amino acid molecule together with two or three Na(+) ions and one proton, in parallel with the counter-transport of one K(+) ion. Plays a redundant role in the rapid removal of released glutamate from the synaptic cleft, which is essential for terminating the postsynaptic action of glutamate. This Ambystoma tigrinum (Eastern tiger salamander) protein is Excitatory amino acid transporter 1 (SLC1A3).